A 193-amino-acid chain; its full sequence is 21 kDa protein (193 aa).

An N-terminal signal peptide occupies residues 1–22 (MKLSKSTLVFSALLVILAAASA).

The sequence is that of 21 kDa protein from Daucus carota (Wild carrot).